We begin with the raw amino-acid sequence, 500 residues long: Cytochrome P450 2C11 (500 aa).

Heme is bound at residue C435.

This sequence belongs to the cytochrome P450 family. The cofactor is heme. As to expression, liver and kidney; male-specific.

The protein localises to the endoplasmic reticulum membrane. The protein resides in the microsome membrane. The catalysed reaction is an organic molecule + reduced [NADPH--hemoprotein reductase] + O2 = an alcohol + oxidized [NADPH--hemoprotein reductase] + H2O + H(+). It carries out the reaction testosterone + reduced [NADPH--hemoprotein reductase] + O2 = 2alpha,17beta-dihydroxyandrost-4-en-3-one + oxidized [NADPH--hemoprotein reductase] + H2O + H(+). The enzyme catalyses testosterone + reduced [NADPH--hemoprotein reductase] + O2 = 16alpha,17beta-dihydroxyandrost-4-en-3-one + oxidized [NADPH--hemoprotein reductase] + H2O + H(+). It catalyses the reaction (5Z,8Z,11Z,14Z)-eicosatetraenoate + reduced [NADPH--hemoprotein reductase] + O2 = (8R,9S)-epoxy-(5Z,11Z,14Z)-eicosatrienoate + oxidized [NADPH--hemoprotein reductase] + H2O + H(+). The catalysed reaction is (5Z,8Z,11Z,14Z)-eicosatetraenoate + reduced [NADPH--hemoprotein reductase] + O2 = (8S,9R)-epoxy-(5Z,11Z,14Z)-eicosatrienoate + oxidized [NADPH--hemoprotein reductase] + H2O + H(+). It carries out the reaction (5Z,8Z,11Z,14Z)-eicosatetraenoate + reduced [NADPH--hemoprotein reductase] + O2 = (11R,12S)-epoxy-(5Z,8Z,14Z)-eicosatrienoate + oxidized [NADPH--hemoprotein reductase] + H2O + H(+). The enzyme catalyses (5Z,8Z,11Z,14Z)-eicosatetraenoate + reduced [NADPH--hemoprotein reductase] + O2 = (11S,12R)-epoxy-(5Z,8Z,14Z)-eicosatrienoate + oxidized [NADPH--hemoprotein reductase] + H2O + H(+). It catalyses the reaction (5Z,8Z,11Z,14Z)-eicosatetraenoate + reduced [NADPH--hemoprotein reductase] + O2 = (14R,15S)-epoxy-(5Z,8Z,11Z)-eicosatrienoate + oxidized [NADPH--hemoprotein reductase] + H2O + H(+). The catalysed reaction is (5Z,8Z,11Z,14Z)-eicosatetraenoate + reduced [NADPH--hemoprotein reductase] + O2 = (14S,15R)-epoxy-(5Z,8Z,11Z)-eicosatrienoate + oxidized [NADPH--hemoprotein reductase] + H2O + H(+). It carries out the reaction (5Z,8Z,11Z,14Z,17Z)-eicosapentaenoate + reduced [NADPH--hemoprotein reductase] + O2 = 8,9-epoxy-(5Z,11Z,14Z,17Z)-eicosatetraenoate + oxidized [NADPH--hemoprotein reductase] + H2O + H(+). The enzyme catalyses (5Z,8Z,11Z,14Z,17Z)-eicosapentaenoate + reduced [NADPH--hemoprotein reductase] + O2 = 11,12-epoxy-(5Z,8Z,14Z,17Z)-eicosatetraenoate + oxidized [NADPH--hemoprotein reductase] + H2O + H(+). It catalyses the reaction (5Z,8Z,11Z,14Z,17Z)-eicosapentaenoate + reduced [NADPH--hemoprotein reductase] + O2 = 14,15-epoxy-(5Z,8Z,11Z,17Z)-eicosatetraenoate + oxidized [NADPH--hemoprotein reductase] + H2O + H(+). The catalysed reaction is (5Z,8Z,11Z,14Z,17Z)-eicosapentaenoate + reduced [NADPH--hemoprotein reductase] + O2 = (17S,18R)-epoxy-(5Z,8Z,11Z,14Z)-eicosatetraenoate + oxidized [NADPH--hemoprotein reductase] + H2O + H(+). It carries out the reaction (5Z,8Z,11Z,14Z,17Z)-eicosapentaenoate + reduced [NADPH--hemoprotein reductase] + O2 = (17R,18S)-epoxy-(5Z,8Z,11Z,14Z)-eicosatetraenoate + oxidized [NADPH--hemoprotein reductase] + H2O + H(+). Its pathway is lipid metabolism; arachidonate metabolism. It participates in steroid metabolism. A cytochrome P450 monooxygenase involved in the metabolism of steroid hormones and fatty acids. Catalyzes the hydroxylation of carbon-hydrogen bonds. Metabolizes testosterone to 2alpha- and 16alpha-hydroxytestosterone. Catalyzes the epoxidation of double bonds of polyunsaturated fatty acids (PUFAs). Converts arachidonic acid (ARA, C20:4(n-6)) primarily to epoxyeicosatrienoic acid (EET) regioisomers, 8,9-, 11,12-, and 14,15-EET, with both R,S and S,R stereochemistry. Preferentially produces 11R,12S-EET enantiomer. To a lesser extent, catalyzes the hydroxylation of arachidonic acid producing hydroxyeicosatetraenoates (HETEs). Metabolizes eicosapentaenoic acid (EPA, C20:5(n-3)) to epoxyeicosatetraenoic acid (EETeTr) regioisomers, 8,9-, 11,12-, 14,15-, and 17,18-EETeTr, preferentially producing 17R,18S-EETeTr enantiomer. Mechanistically, uses molecular oxygen inserting one oxygen atom into a substrate, and reducing the second into a water molecule, with two electrons provided by NADPH via cytochrome P450 reductase (NADPH--hemoprotein reductase). The sequence is that of Cytochrome P450 2C11 (Cyp2c11) from Rattus norvegicus (Rat).